A 244-amino-acid polypeptide reads, in one-letter code: uncharacterized protein (244 aa).

The HTH gntR-type domain maps to 7-74; sequence VKEKDQVVAH…YHRGAFIERF (68 aa). Residues 34-53 constitute a DNA-binding region (H-T-H motif); it reads RNEIAHGLGVSRVPIQEALV.

This is an uncharacterized protein from Mycobacterium tuberculosis (strain CDC 1551 / Oshkosh).